The sequence spans 267 residues: Chaperone protein MyfB (267 aa).

Residues 1 to 34 (MKYKFSHNFISYNLFLFVFMSLILLPYSHASSMG) form the signal peptide. The cysteines at positions 127 and 164 are disulfide-linked.

The protein belongs to the periplasmic pilus chaperone family.

It localises to the periplasm. Required for the biogenesis of the MyfA fimbria. The chain is Chaperone protein MyfB (myfB) from Yersinia enterocolitica.